Consider the following 158-residue polypeptide: uncharacterized protein (158 aa).

The signal sequence occupies residues 1–16 (MFRPILILTILSCVLA). An N-linked (GlcNAc...) asparagine glycan is attached at N122.

This is an uncharacterized protein from Caenorhabditis elegans.